The sequence spans 396 residues: L-lactate dehydrogenase (396 aa).

The FMN hydroxy acid dehydrogenase domain occupies 1 to 380; it reads MIISAASDYR…SGDSLVQELG (380 aa). Residue Y24 participates in substrate binding. S106 and Q127 together coordinate FMN. Y129 contacts substrate. T155 provides a ligand contact to FMN. R164 serves as a coordination point for substrate. K251 contacts FMN. H275 functions as the Proton acceptor in the catalytic mechanism. R278 lines the substrate pocket. 306 to 330 serves as a coordination point for FMN; it reads DSGIRNGLDVVRMIALGADTVLLGR.

The protein belongs to the FMN-dependent alpha-hydroxy acid dehydrogenase family. It depends on FMN as a cofactor.

It is found in the cell inner membrane. The enzyme catalyses (S)-lactate + A = pyruvate + AH2. Catalyzes the conversion of L-lactate to pyruvate. Is coupled to the respiratory chain. The polypeptide is L-lactate dehydrogenase (Salmonella typhimurium (strain LT2 / SGSC1412 / ATCC 700720)).